The primary structure comprises 192 residues: Fe/S biogenesis protein NfuA (192 aa).

Residues C149 and C152 each coordinate [4Fe-4S] cluster.

The protein belongs to the NfuA family. In terms of assembly, homodimer. The cofactor is [4Fe-4S] cluster.

Its function is as follows. Involved in iron-sulfur cluster biogenesis. Binds a 4Fe-4S cluster, can transfer this cluster to apoproteins, and thereby intervenes in the maturation of Fe/S proteins. Could also act as a scaffold/chaperone for damaged Fe/S proteins. This chain is Fe/S biogenesis protein NfuA, found in Shewanella halifaxensis (strain HAW-EB4).